The chain runs to 200 residues: MSQPDNHSSRSASVSRRTSETDISIDLNLDGTGTHSISSGVVFLDHMLANFSKHAQIDITLTCKGDTDVDDHHSVEDIALVLGSALLQSLGDKKGIKRYGWSMIPMDEALARCALDLGGRSYSVFNATFNRSVVNGFSTEMVEHFFLSLSRTLHANIHISILEGQNTHHKIEAIFKAFAYALKDAISISGTGIPSTKGVI.

Belongs to the imidazoleglycerol-phosphate dehydratase family.

It is found in the cytoplasm. The catalysed reaction is D-erythro-1-(imidazol-4-yl)glycerol 3-phosphate = 3-(imidazol-4-yl)-2-oxopropyl phosphate + H2O. The protein operates within amino-acid biosynthesis; L-histidine biosynthesis; L-histidine from 5-phospho-alpha-D-ribose 1-diphosphate: step 6/9. This is Imidazoleglycerol-phosphate dehydratase from Prosthecochloris aestuarii (strain DSM 271 / SK 413).